A 462-amino-acid chain; its full sequence is Metal cation symporter ZIP14 (462 aa).

The first 16 residues, 1 to 16 (MPLLLLSALLPFSLMA), serve as a signal peptide directing secretion. The Extracellular portion of the chain corresponds to 17-138 (GPTPSTGKEL…PSPGEVWGYG (122 aa)). N-linked (GlcNAc...) asparagine glycans are attached at residues asparagine 42, asparagine 68, asparagine 83, and asparagine 119. The helical transmembrane segment at 139-159 (FLCVTVISLCSLFGAGVVPFM) threads the bilayer. The Cytoplasmic portion of the chain corresponds to 160–167 (KKACYKRL). Residues 168–188 (LLFCIALAIGTLFSNALFQLI) traverse the membrane as a helical segment. Residues 189-201 (PEAFGFNPLEDSY) lie on the Extracellular side of the membrane. The helical transmembrane segment at 202–222 (VFTSSVIFGGFYLFFFTEKVL) threads the bilayer. Topologically, residues 223–322 (KMMLKQKHEH…SDGLHNFIDG (100 aa)) are cytoplasmic. The short motif at 230-237 (HEHGHSHY) is the HHHGHXHX-motif element. Positions 235–285 (SHYSADTSKRDAEEGVTEKLQNGDLDHMIPPPHGSESDLRGDEKAVQQQDL) are disordered. 2 stretches are compositionally biased toward basic and acidic residues: residues 241–251 (TSKRDAEEGVT) and 269–279 (SESDLRGDEKA). The chain crosses the membrane as a helical span at residues 323–343 (LAIGASFTVSVFQGVSTSIAI). The Extracellular segment spans residues 344-367 (LCEEFPHELGDFVILLNAGMSIPQ). The XEXPHE-motif signature appears at 346-351 (EEFPHE). Residues 368–388 (ALFFNFLSACCCYLGLAFGIL) traverse the membrane as a helical segment. Over 389 to 396 (AGSHFSSN) the chain is Cytoplasmic. Residues 397 to 417 (WIFALAGGMFLYIALSDMFPE) traverse the membrane as a helical segment. At 418-431 (MNEVSKEDEEGGRA) the chain is on the extracellular side. The helical transmembrane segment at 432 to 452 (FSAFMIQNAGLLTGFAIMLLL) threads the bilayer. The Cytoplasmic segment spans residues 453–462 (TTFSGQIQLG).

This sequence belongs to the ZIP transporter (TC 2.A.5) family. In terms of assembly, homotrimer.

The protein resides in the cell membrane. Its subcellular location is the apical cell membrane. The protein localises to the basolateral cell membrane. It is found in the early endosome membrane. It localises to the late endosome membrane. The protein resides in the lysosome membrane. The enzyme catalyses Zn(2+)(out) + 2 hydrogencarbonate(out) = Zn(2+)(in) + 2 hydrogencarbonate(in). It catalyses the reaction Mn(2+)(out) + 2 hydrogencarbonate(out) = Mn(2+)(in) + 2 hydrogencarbonate(in). The catalysed reaction is Fe(2+)(out) + 2 hydrogencarbonate(out) = Fe(2+)(in) + 2 hydrogencarbonate(in). It carries out the reaction Cd(2+)(out) + 2 hydrogencarbonate(out) = Cd(2+)(in) + 2 hydrogencarbonate(in). Electroneutral transporter of the plasma membrane mediating the cellular uptake of the divalent metal cations zinc, manganese and iron that are important for tissue homeostasis, metabolism, development and immunity. Functions as an energy-dependent symporter, transporting through the membranes an electroneutral complex composed of a divalent metal cation and two bicarbonate anions. Beside these endogenous cellular substrates, can also import cadmium a non-essential metal which is cytotoxic and carcinogenic. The sequence is that of Metal cation symporter ZIP14 from Xenopus tropicalis (Western clawed frog).